We begin with the raw amino-acid sequence, 234 residues long: Glucosamine-6-phosphate deaminase (234 aa).

Asp62 acts as the Proton acceptor; for enolization step in catalysis. Asn128 acts as the For ring-opening step in catalysis. The active-site Proton acceptor; for ring-opening step is the His130. The active-site For ring-opening step is the Glu135.

It belongs to the glucosamine/galactosamine-6-phosphate isomerase family. NagB subfamily.

It catalyses the reaction alpha-D-glucosamine 6-phosphate + H2O = beta-D-fructose 6-phosphate + NH4(+). It functions in the pathway amino-sugar metabolism; N-acetylneuraminate degradation; D-fructose 6-phosphate from N-acetylneuraminate: step 5/5. Functionally, catalyzes the reversible isomerization-deamination of glucosamine 6-phosphate (GlcN6P) to form fructose 6-phosphate (Fru6P) and ammonium ion. In Lactobacillus delbrueckii subsp. bulgaricus (strain ATCC 11842 / DSM 20081 / BCRC 10696 / JCM 1002 / NBRC 13953 / NCIMB 11778 / NCTC 12712 / WDCM 00102 / Lb 14), this protein is Glucosamine-6-phosphate deaminase.